Here is a 203-residue protein sequence, read N- to C-terminus: Small ribosomal subunit protein uS4 (203 aa).

The 64-residue stretch at 93 to 156 folds into the S4 RNA-binding domain; that stretch reads RRLDNVVYRL…LKVPAILEAV (64 aa).

This sequence belongs to the universal ribosomal protein uS4 family. As to quaternary structure, part of the 30S ribosomal subunit. Contacts protein S5. The interaction surface between S4 and S5 is involved in control of translational fidelity.

Functionally, one of the primary rRNA binding proteins, it binds directly to 16S rRNA where it nucleates assembly of the body of the 30S subunit. In terms of biological role, with S5 and S12 plays an important role in translational accuracy. This Streptococcus pneumoniae serotype 2 (strain D39 / NCTC 7466) protein is Small ribosomal subunit protein uS4.